Reading from the N-terminus, the 1169-residue chain is Rabankyrin-5 (1169 aa).

Ala-2 is modified (N-acetylalanine). The 63-residue stretch at 68 to 130 (SDLKIKVGDR…IYTDELEFRE (63 aa)) folds into the BTB domain. ANK repeat units follow at residues 217–247 (KTEY…QLPG), 255–284 (NGDL…DVDM), 288–317 (NGWS…LVNA), 322–362 (AQET…NPNM), and 366–396 (KGRT…DLEL). At Ser-270 the chain carries Phosphoserine. The NPF motif lies at 421–423 (NPF). ANK repeat units follow at residues 490–519 (WGET…NPNL), 542–572 (YLQT…ALHA), 588–617 (RDQT…SIND), 621–650 (DGQT…DINV), 654–683 (DGET…DMSV), 687–716 (KGNP…DATC), 724–753 (CLQT…DVNS), 769–798 (DGQT…NVNA), 802–832 (EGRT…ELSV), 836–865 (QGLT…GAAE), 870–899 (KGRN…NVNS), 905–934 (SKLT…KVNE), 938–967 (HRQT…DFAA), 971–1001 (NGNN…DAEA), 1005–1037 (RGQS…EYPL), and 1043–1072 (EGNT…RLGV). Residues 650–759 (VRTQDGETAL…DVNSPRQPGT (110 aa)) are interaction with RHOD and RAB5A. The FYVE-type zinc-finger motif lies at 1104–1164 (WCDGSNCYEC…VCNICFDVLT (61 aa)). Zn(2+) is bound by residues Cys-1110, Cys-1113, Cys-1126, Cys-1129, Cys-1134, Cys-1137, Cys-1156, and Cys-1159.

As to quaternary structure, interacts with RAB5A (in GTP-bound form). Interacts with RHOD (independent of GTP-loaded status). Interacts with EHD1. Interacts with VPS26A; the interaction is independent of EHD1 and is indicative for an association with the cargo recognition subcomplex of the retromer complex. Expressed in kidney proximal tubule epithelial cells; at protein level.

It is found in the cytoplasm. It localises to the endosome membrane. Its subcellular location is the cytoplasmic vesicle. Proposed effector of Rab5. Binds to phosphatidylinositol 3-phosphate (PI(3)P). Involved in homotypic early endosome fusion and to a lesser extent in heterotypic fusion of chlathrin-coated vesicles with early endosomes. Required for correct endosomal localization. Involved in the internalization and trafficking of activated tyrosine kinase receptors such as PDGFRB. Regulates the subcellular localization of the retromer complex in a EHD1-dependent manner. Involved in endosome-to-Golgi transport and biosynthetic transport to late endosomes and lysosomes indicative for a regulation of retromer complex-mediated retrograde transport. Involved in macropinocytosis; the function is dependent on Rab5-GTP. The protein is Rabankyrin-5 (Ankfy1) of Mus musculus (Mouse).